The chain runs to 341 residues: Methionine import ATP-binding protein MetN 3 (341 aa).

Residues 2 to 241 (ILLENVKKIY…PQQDITKRFV (240 aa)) enclose the ABC transporter domain. An ATP-binding site is contributed by 38-45 (GYSGAGKS).

This sequence belongs to the ABC transporter superfamily. Methionine importer (TC 3.A.1.24) family. In terms of assembly, the complex is composed of two ATP-binding proteins (MetN), two transmembrane proteins (MetI) and a solute-binding protein (MetQ).

Its subcellular location is the cell membrane. The enzyme catalyses L-methionine(out) + ATP + H2O = L-methionine(in) + ADP + phosphate + H(+). It catalyses the reaction D-methionine(out) + ATP + H2O = D-methionine(in) + ADP + phosphate + H(+). In terms of biological role, part of the ABC transporter complex MetNIQ involved in methionine import. Responsible for energy coupling to the transport system. This Bacillus anthracis protein is Methionine import ATP-binding protein MetN 3.